Reading from the N-terminus, the 176-residue chain is Probable inosine/xanthosine triphosphatase (176 aa).

Asp-36 contributes to the Mg(2+) binding site.

This sequence belongs to the YjjX NTPase family. In terms of assembly, homodimer. Mg(2+) is required as a cofactor. It depends on Mn(2+) as a cofactor.

The catalysed reaction is XTP + H2O = XDP + phosphate + H(+). It carries out the reaction ITP + H2O = IDP + phosphate + H(+). Functionally, phosphatase that hydrolyzes non-canonical purine nucleotides such as XTP and ITP to their respective diphosphate derivatives. Probably excludes non-canonical purines from DNA/RNA precursor pool, thus preventing their incorporation into DNA/RNA and avoiding chromosomal lesions. This Saccharolobus islandicus (strain Y.G.57.14 / Yellowstone #1) (Sulfolobus islandicus) protein is Probable inosine/xanthosine triphosphatase.